We begin with the raw amino-acid sequence, 2904 residues long: Protein eyes shut homolog (2904 aa).

A signal peptide spans 1-23; the sequence is MRNPKLAIIVFLLSCVIYGPVYS. N-linked (GlcNAc...) asparagine glycans are attached at residues N41 and N135. 4 EGF-like domains span residues 174-216, 217-259, 263-298, and 300-336; these read KPQL…RYCE, NVDG…VNCS, GNQNCSKWCKEGACLKVSSTSYRCECFTGYTGTYCE, and KRLFCDSNPCRNDGRCEETANGYVCTCPGGFTGLNCE. Cystine bridges form between C178–C193, C187–C204, C206–C215, C221–C232, C226–C247, and C249–C258. N257 and N266 each carry an N-linked (GlcNAc...) asparagine glycan. Intrachain disulfides connect C267-C276, C271-C286, C288-C297, C304-C315, C309-C324, and C326-C335. N-linked (GlcNAc...) asparagine glycosylation is present at N362. 3 consecutive EGF-like domains span residues 375–411, 413–451, and 453–496; these read QAEVCGTLPCLNGGICVVPNGQYHCRCRQGFSGKNCE, IIDFCKLLNINCLNEGLCLNRVGGYNCLCAPGWTGEFCQ, and LENA…PYCE. 12 disulfides stabilise this stretch: C379–C390, C384–C399, C401–C410, C417–C430, C424–C439, C441–C450, C457–C470, C464–C484, C486–C495, C502–C513, C507–C522, and C524–C533. Positions 498 to 534 constitute an EGF-like 8; calcium-binding domain; it reads EVNECDSSPCQHQGTCTDFVGYYKCTCPSGYTGIDCE. The N-linked (GlcNAc...) asparagine glycan is linked to N544. Residues 565 to 603 form the EGF-like 9 domain; sequence HTPCPHYLQPCANGGHCVLHNITSYSCVCAPGWTGATCL. 78 cysteine pairs are disulfide-bonded: C568–C581, C575–C591, C593–C602, C609–C620, C614–C629, C631–C640, C645–C656, C650–C665, C667–C676, C683–C694, C688–C703, C705–C714, C721–C732, C726–C741, C743–C752, C759–C772, C764–C781, C783–C792, C799–C810, C804–C819, C821–C830, C837–C848, C842–C857, C859–C868, C875–C886, C880–C895, C897–C906, C913–C924, C918–C933, C935–C944, C951–C962, C956–C971, C973–C982, C987–C999, C993–C1014, C1016–C1025, C1032–C1042, C1037–C1051, C1053–C1062, C1069–C1080, C1074–C1089, C1091–C1100, C1107–C1118, C1112–C1127, C1129–C1138, C1145–C1156, C1150–C1167, C1169–C1178, C1185–C1198, C1192–C1208, C1210–C1219, C1226–C1237, C1231–C1246, C1248–C1257, C1264–C1275, C1269–C1284, C1286–C1295, C1302–C1313, C1307–C1322, C1324–C1333, C1340–C1351, C1345–C1360, C1362–C1371, C1378–C1388, C1383–C1397, C1399–C1408, C1415–C1426, C1420–C1435, C1437–C1446, C1453–C1469, C1463–C1479, C1481–C1490, C1497–C1508, C1502–C1517, C1519–C1528, C1535–C1545, C1540–C1556, and C1558–C1567. N585 is a glycosylation site (N-linked (GlcNAc...) asparagine). The EGF-like 10; calcium-binding domain maps to 605 to 641; it reads NINECVQHRCQNRATCVDEVGGYSCLCGHGYTGVHCE. One can recognise an EGF-like 11 domain in the interval 642–677; sequence LDFCSGHQCSEHAVCVDQQHNYTCRCMLGYEGTLCE. An N-linked (GlcNAc...) asparagine glycan is attached at N662. In terms of domain architecture, EGF-like 12; calcium-binding spans 679–715; that stretch reads ETDECKSAPCTNNATCIDLVAGYQCLCAPGFKGRTCS. N-linked (GlcNAc...) asparagine glycosylation is present at N691. EGF-like domains lie at 717-753, 755-793, and 795-831; these read SMNECWSRPCNNGGSCIDLVNDYICNCPLGFTGHDCS, PATGCTSNPCNTKGTSMCEEQQDGFKCVCHHGYTGLFCE, and SINHCVEGLCHHGSECVDLTKGFMCECLPGLRGRLCE. In terms of domain architecture, EGF-like 16; calcium-binding spans 833 to 869; that stretch reads NIDDCLDKPCGALSICKDGINAYDCFCAPGFVGNNCE. The region spanning 871–907 is the EGF-like 17; calcium-binding domain; the sequence is EVNECLSQPCQNGASCSDELNSFSCLCLAGTTGSLCE. Positions 909–945 constitute an EGF-like 18; calcium-binding domain; it reads NIDECQSSPCMNNGTCLDLSDGFKCICPSGFSGPECS. Residue N921 is glycosylated (N-linked (GlcNAc...) asparagine). The region spanning 947 to 983 is the EGF-like 19; calcium-binding domain; that stretch reads DINECVSYPCKNGGSCIDQPGNYYCRCLAPFKGLNCE. In terms of domain architecture, EGF-like 20 spans 984–1026; the sequence is LLPCEAVNPCDNGAECVEEADLVLFPLGFQCRCRKGFTGPRCE. Residues 1028 to 1063 enclose the EGF-like 21; calcium-binding domain; it reads NIDECSSNPCLNGFCYDAVDGFYCLCNPGYAGVRCE. One can recognise an EGF-like 22 domain in the interval 1065–1101; the sequence is HINDCASNMCENNSTCVDLHLSYNCLCLPGWEGEYCQ. An N-linked (GlcNAc...) asparagine glycan is attached at N1077. Residues 1103 to 1139 enclose the EGF-like 23; calcium-binding domain; sequence ETNECLSNPCKNNATCTDLLNAYRCVCPQGWTGLDCD. An N-linked (GlcNAc...) asparagine glycan is attached at N1115. EGF-like domains follow at residues 1141–1179 and 1181–1220; these read DVKECSSSPCLNGAHCVESDTPGEFSCTCPPFFTGPLCE and PYDPCELQRNPCLHNSTCRAQSDGTALCVCPVGFEGTRCE. N-linked (GlcNAc...) asparagine glycosylation is present at N1195. The EGF-like 26; calcium-binding domain occupies 1222–1258; that stretch reads DSDDCVSRPCQNRGICVDGVNSYSCFCEPGFSGLHCE. Residues 1260–1296 enclose the EGF-like 27; calcium-binding domain; it reads DINECASNPCQNQAVCQDLVNGFQCSCVPGYFGPHCN. Residues 1298-1334 enclose the EGF-like 28; calcium-binding domain; the sequence is DVNECDSSPCLHESVCINKPGGFACVCSAGFSGKWCE. The 37-residue stretch at 1336 to 1372 folds into the EGF-like 29; calcium-binding domain; the sequence is NVDECKSNPCRNNGSCIDGLNGYQCVCSRGFMGDHCE. N-linked (GlcNAc...) asparagine glycosylation is present at N1348. Residues 1374–1409 enclose the EGF-like 30; calcium-binding domain; the sequence is NTDECSSGPCVHGSCLDEIDAFSCQCEVGWTGHRCQ. Residues 1411 to 1447 form the EGF-like 31; calcium-binding domain; that stretch reads NINECEAHPCLNGGSCVDLLDKYACICADGFTGKNCD. In terms of domain architecture, EGF-like 32 spans 1449-1491; it reads DQNVCLQTSLNFSLCFNGGTCVDGPGVNFTCSCRPGFMGDFCE. 2 N-linked (GlcNAc...) asparagine glycosylation sites follow: N1459 and N1476. The EGF-like 33; calcium-binding domain occupies 1493 to 1529; sequence EMNECCSEPCFNGAICQDLINGYQCHCRPGWTGLHCE. Positions 1531 to 1568 constitute an EGF-like 34 domain; that stretch reads DINECLLQPCNQGMCIQNEPGHGYTCFCRPGFVGENCE. N-linked (GlcNAc...) asparagine glycosylation is found at N1591, N1755, and N1788. A Laminin G-like 1 domain is found at 1640-1818; that stretch reads ASFGGYSGNS…AIARNNVDNC (179 aa). 4 disulfides stabilise this stretch: C1792/C1818, C1860/C1871, C1865/C1885, and C1887/C1896. Residues 1856-1897 enclose the EGF-like 35 domain; the sequence is PAPVCPQGICLNGGTCRPVSLPSGASSFFCDCPLHFTGRLCE. The 201-residue stretch at 1902-2102 folds into the Laminin G-like 2 domain; it reads VFSPRFDGNS…NIQNCDAAVC (201 aa). Residues N2025 and N2064 are each glycosylated (N-linked (GlcNAc...) asparagine). Cystine bridges form between C2071–C2102, C2102–C2113, C2107–C2122, C2124–C2133, C2138–C2149, C2143–C2159, and C2161–C2170. 2 EGF-like domains span residues 2098–2134 and 2135–2171; these read DAAVCQHQPCRNGGTCISDAESWFCACPSLYSGKLCQ and FTACERNPCARGATCVPQTQLEAACLCPYGRQGLLCD. Residues N2175 and N2216 are each glycosylated (N-linked (GlcNAc...) asparagine). One can recognise a Laminin G-like 3 domain in the interval 2182–2372; that stretch reads SGLDEFGYSS…PLSGRNVGQC (191 aa). Cystine bridges form between C2339-C2372, C2377-C2388, C2382-C2397, C2399-C2408, C2415-C2431, C2425-C2440, and C2442-C2451. EGF-like domains lie at 2373–2409 and 2411–2452; these read GVNPCSLVFCHNGGTCVDSGSSVYCQCVFGWKGALCS and KVSF…LHCQ. In terms of domain architecture, Laminin G-like 4 spans 2459–2642; the sequence is DPFFSGNQSS…NVGDWDGTAC (184 aa). N-linked (GlcNAc...) asparagine glycans are attached at residues N2465, N2528, and N2570. 2 EGF-like domains span residues 2638 to 2675 and 2676 to 2714; these read DGTACGYKVCKNGGHCHPSGDFSFTCICPSLWTGSRCQ and QSIQCLNNLCQHNSVCIHNSTSASYSCMCSLGWTGTHCD. 6 disulfides stabilise this stretch: C2642–C2653, C2647–C2663, C2665–C2674, C2680–C2691, C2685–C2702, and C2704–C2713. A glycan (N-linked (GlcNAc...) asparagine) is linked at N2694. The 176-residue stretch at 2719–2894 folds into the Laminin G-like 5 domain; the sequence is LKTIRFIGNS…TKQLQFLQTC (176 aa). N2750 and N2816 each carry an N-linked (GlcNAc...) asparagine glycan.

This sequence belongs to the EYS family. In terms of tissue distribution, expressed in retina where it localizes between the retinal pigment epithelium and the outer nuclear layer (at protein level).

The protein resides in the cell projection. It is found in the cilium. It localises to the cytoplasm. The protein localises to the cytoskeleton. Its subcellular location is the cilium axoneme. The protein resides in the secreted. It is found in the extracellular space. It localises to the extracellular matrix. The protein localises to the interphotoreceptor matrix. In terms of biological role, required to maintain the integrity of photoreceptor cells. Specifically required for normal morphology of the photoreceptor ciliary pocket, and might thus facilitate protein trafficking between the photoreceptor inner and outer segments via the transition zone. This is Protein eyes shut homolog from Danio rerio (Zebrafish).